The sequence spans 5405 residues: IgGFc-binding protein (5405 aa).

Residues 1–23 (MGALWSWWILWAGATLLWGLTQE) form the signal peptide. The tract at residues 24–450 (ASVDLKNTGR…EPSCEGMQCA (427 aa)) is igGFc-binding. N-linked (GlcNAc...) asparagine glycosylation is found at Asn75 and Asn91. The region spanning 470 to 650 (AVCRAQGDPH…KLDDGDYLCE (181 aa)) is the VWFD 1 domain. 2 cysteine pairs are disulfide-bonded: Cys472-Cys611 and Cys494-Cys649. A TIL 1 domain is found at 745 to 799 (CPANSRYELCGPACPTSCNGAAAPSNCSGRPCVEGCVCLPGFVASGGACVPASSC). In terms of domain architecture, VWFD 2 spans 862–1041 (GTCQGSGDPH…WQEETRPGCG (180 aa)). Disulfide bonds link Cys864–Cys1003 and Cys886–Cys1040. One can recognise a TIL 2 domain in the interval 1136 to 1189 (CPPHSHYEACSYGCPLSCGDLPVPGGCGSECHEGCVCDEGFALSGESCLPLASC). In terms of domain architecture, VWFD 3 spans 1250-1429 (STCQASGDPH…EEVVPDSPCL (180 aa)). 2 disulfide bridges follow: Cys1252–Cys1390 and Cys1274–Cys1428. An N-linked (GlcNAc...) (complex) asparagine glycan is attached at Asn1317. The TIL 3 domain maps to 1532–1585 (CPPNSHYELCADTCSLGCSALSAPPQCQDGCAEGCQCDSGFLYNGQACVPIQQC). One can recognise a VWFD 4 domain in the interval 1671–1854 (ATCWLWGDPH…RAPGWDPLCW (184 aa)). 3 disulfide bridges follow: Cys1673–Cys1815, Cys1695–Cys1853, and Cys1704–Cys1812. An N-linked (GlcNAc...) asparagine glycan is attached at Asn1743. Residues 1950-2007 (CPENSHYEVCGSPCPASCPSPAPLTTPAVCEGPCVEGCQCDAGFVLSADRCVPLNNGC) form the TIL 4 domain. Residues 2070–2253 (AECQAWGDPH…VSKPCPSPCT (184 aa)) enclose the VWFD 5 domain. 2 cysteine pairs are disulfide-bonded: Cys2072-Cys2211 and Cys2094-Cys2252. The N-linked (GlcNAc...) asparagine glycan is linked to Asn2138. The 54-residue stretch at 2337-2390 (CPAHSHYELCGDSCPGSCPSLSAPEGCESACREGCVCDAGFVLSGDTCVPVGQC) folds into the TIL 5 domain. The VWFD 6 domain occupies 2451-2630 (TTCQASGDPH…EEVVPDSPCL (180 aa)). 2 cysteine pairs are disulfide-bonded: Cys2453–Cys2591 and Cys2475–Cys2629. Asn2518 carries an N-linked (GlcNAc...) asparagine glycan. The 54-residue stretch at 2733–2786 (CPQNSHYELCADTCSLGCSALSAPLQCPDGCAEGCQCDSGFLYNGQACVPIQQC) folds into the TIL 6 domain. The 184-residue stretch at 2872–3055 (ATCWLWGDPH…RAPGWDPLCW (184 aa)) folds into the VWFD 7 domain. Disulfide bonds link Cys2874/Cys3016, Cys2896/Cys3054, and Cys2905/Cys3013. One can recognise a TIL 7 domain in the interval 3151–3208 (CPENSHYEVCGPPCPASCPSPAPLTTPAVCEGPCVEGCQCDAGFVLSADRCVPLNNGC). The VWFD 8 domain occupies 3271-3454 (AECQAWGDPH…VSKPCPSPCT (184 aa)). Intrachain disulfides connect Cys3273–Cys3412 and Cys3295–Cys3453. The TIL 8 domain maps to 3538–3591 (CPAHSHYELCGDSCPGSCPSLSAPEGCESACREGCVCDAGFVLSGDTCVPVGQC). The VWFD 9 domain maps to 3652-3831 (TTCQASGDPH…EEVVPDSPCL (180 aa)). Disulfide bonds link Cys3654/Cys3792 and Cys3676/Cys3830. Asn3719 is a glycosylation site (N-linked (GlcNAc...) asparagine). The region spanning 3934-3987 (CPQNSHYELCADTCSLGCSALSAPLQCPDGCAEGCQCDSGFLYNGQACVPIQQC) is the TIL 9 domain. The region spanning 4073–4256 (ATCWLWGDPH…RAPGWDPLCW (184 aa)) is the VWFD 10 domain. 3 cysteine pairs are disulfide-bonded: Cys4075–Cys4217, Cys4097–Cys4255, and Cys4106–Cys4214. The N-linked (GlcNAc...) asparagine glycan is linked to Asn4145. The TIL 10 domain maps to 4352-4409 (CPENSHYEVCGPPCPASCPSPAPLTTPAVCEGPCVEGCQCDAGFVLSADRCVPLNNGC). The 184-residue stretch at 4472-4655 (AECQAWGDPH…VSKPCPSPCT (184 aa)) folds into the VWFD 11 domain. Disulfide bonds link Cys4474-Cys4613 and Cys4496-Cys4654. N-linked (GlcNAc...) asparagine glycosylation occurs at Asn4540. The TIL 11 domain occupies 4739–4792 (CPAHSHYELCGDSCPVSCPSLSAPEGCESACREGCVCDAGFVLSGDTCVPVGQC). Residues 4854 to 5025 (GRCLANGGIH…RAPGSSKGCG (172 aa)) enclose the VWFD 12 domain. Intrachain disulfides connect Cys4856-Cys4986 and Cys4878-Cys5024. Residues 5121-5174 (CPAHSHYSICTRTCQGSCAALSGLTGCTTRCFEGCECDDRFLLSQGVCIPVQDC) form the TIL 12 domain. The VWFD 13 domain occupies 5233–5404 (GLCVLSVGAN…WRAQDFSPCY (172 aa)). Cysteines 5235 and 5372 form a disulfide.

As to quaternary structure, interacts with the Fc portion of IgG and with MUC2. Mainly expressed in placenta and colon epithelium. Expressed in thyroid, and down-regulated in thyroid carcinomas. Present in serum, with higher levels in patients with various autoimmune diseases (at protein level).

It localises to the secreted. In terms of biological role, may be involved in the maintenance of the mucosal structure as a gel-like component of the mucosa. This is IgGFc-binding protein (FCGBP) from Homo sapiens (Human).